The sequence spans 378 residues: Signal peptide peptidase (378 aa).

The interval 1–27 (MDSAVSDPHNGSAEAGTPANGTTRPPS) is disordered. Topologically, residues 1 to 31 (MDSAVSDPHNGSAEAGTPANGTTRPPSTPEG) are lumenal. 2 N-linked (GlcNAc...) asparagine glycosylation sites follow: N10 and N20. A helical membrane pass occupies residues 32-52 (IALAYGSLLLMALLPIFFGAL). At 53–77 (RSVRCARGKSSSDMPETITSRDAAR) the chain is on the cytoplasmic side. The helical transmembrane segment at 78 to 98 (FPIIASCTLLGLYLFFKIFSQ) threads the bilayer. Residues 99-100 (EY) are Lumenal-facing. The chain crosses the membrane as a helical span at residues 101-121 (INLLLSMYFFVLGILALSHTI). At 122-157 (SPFMNKFFPANFPNRQYQLLFTQGSGENKEEIINYE) the chain is on the cytoplasmic side. Residues 158-178 (FDTKDLVCLGLSSVVGVWYLL) form a helical membrane-spanning segment. The Lumenal portion of the chain corresponds to 179 to 181 (RKH). A helical transmembrane segment spans residues 182 to 202 (WIANNLFGLAFSLNGVELLHL). Over 203–209 (NNVSTGC) the chain is Cytoplasmic. A helical membrane pass occupies residues 210 to 230 (ILLGGLFIYDIFWVFGTNVMV). Residue D219 is part of the active site. Residues 231 to 256 (TVAKSFEAPIKLVFPQDLLEKGLEAD) lie on the Lumenal side of the membrane. A helical transmembrane segment spans residues 257–277 (NFAMLGLGDIVIPGIFIALLL). D265 is an active-site residue. Over 278 to 290 (RFDISLKKNTHTY) the chain is Cytoplasmic. Residues 291–311 (FYTSFAAYIFGLGLTIFIMHI) traverse the membrane as a helical segment. Residues 312 to 314 (FKH) lie on the Lumenal side of the membrane. A helical transmembrane segment spans residues 315–335 (AQPALLYLVPACIGFPVLVAL). A PAL motif is present at residues 317–319 (PAL). Residues 336–378 (AKGEVAEMFSYEESNPKDPAAETESKEESTEASASKRLEKKEK) lie on the Cytoplasmic side of the membrane. The segment at 346 to 378 (YEESNPKDPAAETESKEESTEASASKRLEKKEK) is disordered. Basic and acidic residues predominate over residues 349 to 378 (SNPKDPAAETESKEESTEASASKRLEKKEK). Residue S368 is modified to Phosphoserine.

It belongs to the peptidase A22B family. As to quaternary structure, monomer. Homodimer. Interacts with RNF139. Interacts with DERL1 and XBP1 isoform 1. Widely expressed with highest levels in liver and kidney. In the brain, expressed predominantly in hippocampus, amygdala, piriform cortex, choroid plexus and arcuate nucleus of the hypothalamic area. Isoform 1 is more strongly expressed than isoform 4 in most tissues except brain and skeletal muscle where isoform 4 is the dominant isoform and in testis where isoform 1 and isoform 4 are expressed at similar levels. In the brain, isoform 4 is not detected in the choroid plexus.

It is found in the endoplasmic reticulum membrane. Its subcellular location is the membrane. The protein resides in the cell membrane. Catalyzes intramembrane proteolysis of signal peptides that have been removed from precursors of secretory and membrane proteins, resulting in the release of the fragment from the ER membrane into the cytoplasm. Required to generate lymphocyte cell surface (HLA-E) epitopes derived from MHC class I signal peptides. Involved in the intramembrane cleavage of the integral membrane protein PSEN1. Cleaves the integral membrane protein XBP1 isoform 1 in a DERL1/RNF139-dependent manner. May play a role in graft rejection. This chain is Signal peptide peptidase, found in Mus musculus (Mouse).